The following is a 91-amino-acid chain: Signal peptidase complex subunit 1 (91 aa).

Over 1 to 28 (MEIFNDLSRKLVFPIDYPSQRRVAKLTD) the chain is Cytoplasmic. Residues 29-48 (IILGSGTLVSCLLGFYAGSL) traverse the membrane as a helical segment. Over 49–51 (SLT) the chain is Lumenal. A helical membrane pass occupies residues 52–71 (LYAFAAAYGLALLLVVPAYG). The Cytoplasmic segment spans residues 72–91 (KYRQQKLAWVGSAAATTKDL).

Belongs to the SPCS1 family. As to quaternary structure, component of the signal peptidase complex (SPC) composed of a catalytic subunit SEC11 and three accessory subunits SPC1, SPC2 and SPC3. The complex induces a local thinning of the ER membrane which is used to measure the length of the signal peptide (SP) h-region of protein substrates. This ensures the selectivity of the complex towards h-regions shorter than 18-20 amino acids. SPC associates with the translocon complex.

It localises to the endoplasmic reticulum membrane. Component of the signal peptidase complex (SPC) which catalyzes the cleavage of N-terminal signal sequences from nascent proteins as they are translocated into the lumen of the endoplasmic reticulum. Dispensable for SPC enzymatic activity. This Eremothecium gossypii (strain ATCC 10895 / CBS 109.51 / FGSC 9923 / NRRL Y-1056) (Yeast) protein is Signal peptidase complex subunit 1 (SPC1).